Reading from the N-terminus, the 185-residue chain is Ribosome-recycling factor (185 aa).

The protein belongs to the RRF family.

It localises to the cytoplasm. Functionally, responsible for the release of ribosomes from messenger RNA at the termination of protein biosynthesis. May increase the efficiency of translation by recycling ribosomes from one round of translation to another. This chain is Ribosome-recycling factor, found in Brevibacillus brevis (strain 47 / JCM 6285 / NBRC 100599).